Consider the following 126-residue polypeptide: MSDPRYQIDVSVVTRYLKEQSDPENSRFAFAYTITVQNNGSLSAKLLSRHWLITNGDGEVEEVRGAGVVGQQPNIDPGQSHTYSSGAVISTRVGTMQGSYQMFAEDGKRFDAEIAPFRLAVPGALH.

Positions Ser2 to His126 constitute an ApaG domain.

The sequence is that of Protein ApaG from Pseudomonas putida (strain ATCC 700007 / DSM 6899 / JCM 31910 / BCRC 17059 / LMG 24140 / F1).